The following is a 401-amino-acid chain: MKYDHILVRFGEISTKGKNRKKFIEKLRQHIRFVLKDFVALKYASDRDRITIMLNGEDPEPISEQLKGVFGIQSFSLAVKCETNLDAIKEAALTAVQEVYEQGNTFKVSTKRSYKQFELDSNEMNREIGGHVLRNTENLTVNVKQPDVHLRIEIREQATYITFKDVKGAGGLPVGSSGRAMLMLSGGFDSPVAGYQAMKRGIQIEAVHFFSPPYTSERAKQKVIDLTECLAAYGGEIKLHIVPFTKIQELIHKQVPENYTMTSTRRMMLKIADKIREKRDALAIITGESLGQVASQTLESMYAINHVTNTPIIRPLIAVDKNDIIDEARRIGTYETSIQPFEDCCTIFTPPSPKTKPKLEKVERYESFADFEPMLDEAVEQIETIIVKNEKKAADEFADLF.

The region spanning 60-165 is the THUMP domain; it reads EPISEQLKGV…EQATYITFKD (106 aa). Residues 183 to 184, 208 to 209, Arg-265, Gly-287, and Gln-296 each bind ATP; these read ML and HF.

It belongs to the ThiI family.

The protein localises to the cytoplasm. It carries out the reaction [ThiI sulfur-carrier protein]-S-sulfanyl-L-cysteine + a uridine in tRNA + 2 reduced [2Fe-2S]-[ferredoxin] + ATP + H(+) = [ThiI sulfur-carrier protein]-L-cysteine + a 4-thiouridine in tRNA + 2 oxidized [2Fe-2S]-[ferredoxin] + AMP + diphosphate. The enzyme catalyses [ThiS sulfur-carrier protein]-C-terminal Gly-Gly-AMP + S-sulfanyl-L-cysteinyl-[cysteine desulfurase] + AH2 = [ThiS sulfur-carrier protein]-C-terminal-Gly-aminoethanethioate + L-cysteinyl-[cysteine desulfurase] + A + AMP + 2 H(+). It participates in cofactor biosynthesis; thiamine diphosphate biosynthesis. In terms of biological role, catalyzes the ATP-dependent transfer of a sulfur to tRNA to produce 4-thiouridine in position 8 of tRNAs, which functions as a near-UV photosensor. Also catalyzes the transfer of sulfur to the sulfur carrier protein ThiS, forming ThiS-thiocarboxylate. This is a step in the synthesis of thiazole, in the thiamine biosynthesis pathway. The sulfur is donated as persulfide by IscS. This chain is Probable tRNA sulfurtransferase, found in Bacillus pumilus (strain SAFR-032).